We begin with the raw amino-acid sequence, 128 residues long: Protein Wnt-2b-B (128 aa).

Disulfide bonds link Cys3-Cys16 and Cys5-Cys11. Residue Ser8 is the site of O-palmitoleoyl serine; by PORCN attachment. N-linked (GlcNAc...) asparagine glycosylation is present at Asn48. 2 cysteine pairs are disulfide-bonded: Cys90–Cys105 and Cys127–Cys128.

The protein belongs to the Wnt family. Post-translationally, palmitoleoylation is required for efficient binding to frizzled receptors. Depalmitoleoylation leads to Wnt signaling pathway inhibition.

It localises to the secreted. The protein resides in the extracellular space. Its subcellular location is the extracellular matrix. Functionally, ligand for members of the frizzled family of seven transmembrane receptors. Functions in the canonical Wnt/beta-catenin signaling pathway. This is Protein Wnt-2b-B (wnt2b-b) from Xenopus laevis (African clawed frog).